A 253-amino-acid chain; its full sequence is 5'-nucleotidase SurE 2 (253 aa).

A divalent metal cation contacts are provided by D8, D9, S39, and N92.

Belongs to the SurE nucleotidase family. A divalent metal cation serves as cofactor.

The protein resides in the cytoplasm. The catalysed reaction is a ribonucleoside 5'-phosphate + H2O = a ribonucleoside + phosphate. Its function is as follows. Nucleotidase that shows phosphatase activity on nucleoside 5'-monophosphates. The polypeptide is 5'-nucleotidase SurE 2 (Burkholderia lata (strain ATCC 17760 / DSM 23089 / LMG 22485 / NCIMB 9086 / R18194 / 383)).